The following is a 370-amino-acid chain: GTPase Obg (370 aa).

The 159-residue stretch at 1–159 (MKFIDEARIE…RMLRLELKVL (159 aa)) folds into the Obg domain. A disordered region spans residues 127–146 (NLHFKSSTNRAPRQKTDGKP). In terms of domain architecture, OBG-type G spans 160 to 334 (ADVGLLGMPN…LCYAIYDYLA (175 aa)). Residues 166–173 (GMPNAGKS), 191–195 (FTTLA), 213–216 (DIPG), 284–287 (NKLD), and 315–317 (SAL) contribute to the GTP site. Mg(2+) contacts are provided by Ser173 and Thr193.

The protein belongs to the TRAFAC class OBG-HflX-like GTPase superfamily. OBG GTPase family. As to quaternary structure, monomer. Mg(2+) serves as cofactor.

It is found in the cytoplasm. An essential GTPase which binds GTP, GDP and possibly (p)ppGpp with moderate affinity, with high nucleotide exchange rates and a fairly low GTP hydrolysis rate. Plays a role in control of the cell cycle, stress response, ribosome biogenesis and in those bacteria that undergo differentiation, in morphogenesis control. This Burkholderia lata (strain ATCC 17760 / DSM 23089 / LMG 22485 / NCIMB 9086 / R18194 / 383) protein is GTPase Obg.